A 505-amino-acid chain; its full sequence is L-carnitine/gamma-butyrobetaine antiporter (505 aa).

12 consecutive transmembrane segments (helical) span residues 10 to 30, 51 to 71, 92 to 112, 143 to 163, 195 to 215, 231 to 251, 263 to 283, 316 to 336, 347 to 367, 403 to 423, 446 to 466, and 475 to 495; these read IEPK…WLTV, WGWA…WLVF, IFMM…SIEI, GPLP…FFFV, FYLV…TPLV, LDAI…ACGL, SYLS…SFIM, WTVF…IFLA, LCFG…TVLG, LSTA…VTLI, LLVR…LLAL, and AIIA…LSFI.

Belongs to the BCCT transporter (TC 2.A.15) family. CaiT subfamily. Homotrimer.

It localises to the cell inner membrane. It catalyses the reaction 4-(trimethylamino)butanoate(in) + (R)-carnitine(out) = 4-(trimethylamino)butanoate(out) + (R)-carnitine(in). Its pathway is amine and polyamine metabolism; carnitine metabolism. Functionally, catalyzes the exchange of L-carnitine for gamma-butyrobetaine. This Salmonella agona (strain SL483) protein is L-carnitine/gamma-butyrobetaine antiporter.